Reading from the N-terminus, the 439-residue chain is L-cysteine:1D-myo-inositol 2-amino-2-deoxy-alpha-D-glucopyranoside ligase 2 (439 aa).

Zn(2+) is bound at residue cysteine 60. L-cysteinyl-5'-AMP-binding positions include 60–63 (CGIT), threonine 75, and 98–100 (NVT). The 'HIGH' region signature appears at 62–72 (ITPYDSTHLGH). A 'ERGGDP' region motif is present at residues 203-208 (ERGGDP). Tryptophan 243 lines the L-cysteinyl-5'-AMP pocket. Zn(2+) is bound at residue cysteine 247. 265-267 (GVD) contributes to the L-cysteinyl-5'-AMP binding site. Histidine 272 provides a ligand contact to Zn(2+). Residue isoleucine 299 participates in L-cysteinyl-5'-AMP binding. The short motif at 305–309 (KMSKS) is the 'KMSKS' region element.

This sequence belongs to the class-I aminoacyl-tRNA synthetase family. MshC subfamily. In terms of assembly, monomer. Zn(2+) is required as a cofactor.

It carries out the reaction 1D-myo-inositol 2-amino-2-deoxy-alpha-D-glucopyranoside + L-cysteine + ATP = 1D-myo-inositol 2-(L-cysteinylamino)-2-deoxy-alpha-D-glucopyranoside + AMP + diphosphate + H(+). Catalyzes the ATP-dependent condensation of GlcN-Ins and L-cysteine to form L-Cys-GlcN-Ins. The protein is L-cysteine:1D-myo-inositol 2-amino-2-deoxy-alpha-D-glucopyranoside ligase 2 of Corynebacterium urealyticum (strain ATCC 43042 / DSM 7109).